We begin with the raw amino-acid sequence, 206 residues long: LexA repressor (206 aa).

A DNA-binding region (H-T-H motif) is located at residues 28–48; that stretch reads RAEIASELGFKSANAAEEHLK. Active-site for autocatalytic cleavage activity residues include Ser122 and Lys160.

This sequence belongs to the peptidase S24 family. Homodimer.

It catalyses the reaction Hydrolysis of Ala-|-Gly bond in repressor LexA.. Represses a number of genes involved in the response to DNA damage (SOS response), including recA and lexA. In the presence of single-stranded DNA, RecA interacts with LexA causing an autocatalytic cleavage which disrupts the DNA-binding part of LexA, leading to derepression of the SOS regulon and eventually DNA repair. This chain is LexA repressor, found in Tolumonas auensis (strain DSM 9187 / NBRC 110442 / TA 4).